A 223-amino-acid chain; its full sequence is FAD-dependent monooxygenase imqC (223 aa).

Residues 139–141, Tyr-189, and Asp-210 contribute to the FAD site; that span reads RFY.

Belongs to the PheA/TfdB FAD monooxygenase family.

It participates in secondary metabolite biosynthesis. FAD-dependent monooxygenase; part of the gene cluster that mediates the biosynthesis of imizoquins A to D, tripeptide-derived alkaloids that serve a protective role against oxidative stress that are essential for normal germination. ImqB is a canonical three-module NRPS that assembles the tripeptide backbone of the imizoquins via condensation of Trp, Tyr, and Leu-derived precursors. N-methylation by imqF and phenol oxidation by imqC, followed by cyclization via the FAD-dependent oxidase imqH carry out the three-step transformation of L-tyrosine into tetrahydroisoquinoline. Importantly, this sequence requires the presence of a free amine in the tyrosine moiety, indicating that isoquinoline formation occurs prior to peptide bond formation. The imidazolidin-4-one ring of imizoquins could form following additional oxidation of the methyl-derived bridgehead carbon by imqH. Lastly, O-methylation by imqG and leucine hydroxylation by imqE complete biosynthesis of the imizoquins. This is FAD-dependent monooxygenase imqC from Aspergillus flavus (strain ATCC 200026 / FGSC A1120 / IAM 13836 / NRRL 3357 / JCM 12722 / SRRC 167).